A 118-amino-acid chain; its full sequence is V-type proton ATPase subunit G 3 (118 aa).

Residues 1-12 show a composition bias toward polar residues; that stretch reads MASQSQGIQQLL. The tract at residues 1 to 37 is disordered; sequence MASQSQGIQQLLQAEKRAKDKLEEAKKRKNKRLRQAK. Positions 3–53 form a coiled coil; the sequence is SQSQGIQQLLQAEKRAKDKLEEAKKRKNKRLRQAKEEATADIDQYRLKREG. The span at 14-26 shows a compositional bias: basic and acidic residues; the sequence is AEKRAKDKLEEAK.

This sequence belongs to the V-ATPase G subunit family. V-ATPase is a heteromultimeric enzyme made up of two complexes: the ATP-hydrolytic V1 complex and the proton translocation V0 complex. The V1 complex consists of three catalytic AB heterodimers that form a heterohexamer, three peripheral stalks each consisting of EG heterodimers, one central rotor including subunits D and F, and the regulatory subunits C and H. The proton translocation complex V0 consists of the proton transport subunit a, a ring of proteolipid subunits c9c'', rotary subunit d, subunits e and f, and two accessory subunits.

Subunit of the V1 complex of vacuolar(H+)-ATPase (V-ATPase), a multisubunit enzyme composed of a peripheral complex (V1) that hydrolyzes ATP and a membrane integral complex (V0) that translocates protons. V-ATPase is responsible for acidifying and maintaining the pH of intracellular compartments and in some cell types, is targeted to the plasma membrane, where it is responsible for acidifying the extracellular environment. In Xenopus tropicalis (Western clawed frog), this protein is V-type proton ATPase subunit G 3 (atp6v1g3).